We begin with the raw amino-acid sequence, 169 residues long: N-alpha-acetyltransferase 50 (169 aa).

An N-acetyltransferase domain is found at 6–155 (IELGDVTPHN…DAHVLQKNLK (150 aa)). At Thr12 the chain carries Phosphothreonine. Tyr31 provides a ligand contact to substrate. An N6-acetyllysine mark is found at Lys34 and Lys37. Tyr73 is an active-site residue. Met75 contacts substrate. 77–90 (LGCLAPYRRLGIGT) contacts acetyl-CoA. A Phosphotyrosine modification is found at Tyr110. The active site involves His112. 117–126 (NESAIDFYRK) contributes to the CoA binding site. The tract at residues 138–141 (YYKR) is substrate. Lys140 is modified (N6-acetyllysine).

The protein belongs to the acetyltransferase family. GNAT subfamily. Component of the N-terminal acetyltransferase E (NatE) complex at least composed of NAA10, NAA15 and NAA50. Interacts with NAA10. Interacts with NAA15. Predominantly interacts with NAA15 in the N-terminal acetyltransferase A complex (NatA complex); the interactions reduce the acetylation activity of the NatA complex. Component of the N-terminal acetyltransferase E (NatE)/HYPK complex at least composed of NAA10, NAA15, NAA50 and HYPK. Within the complex interacts with NAA15. Its capacity to interact with the NatA complex is reduced by HYPK. Interacts with NAA35.

The protein localises to the cytoplasm. Its subcellular location is the nucleus. The catalysed reaction is N-terminal L-methionyl-L-alanyl-[protein] + acetyl-CoA = N-terminal N(alpha)-acetyl-L-methionyl-L-alanyl-[protein] + CoA + H(+). It catalyses the reaction N-terminal L-methionyl-L-seryl-[protein] + acetyl-CoA = N-terminal N(alpha)-acetyl-L-methionyl-L-seryl-[protein] + CoA + H(+). It carries out the reaction N-terminal L-methionyl-L-valyl-[protein] + acetyl-CoA = N-terminal N(alpha)-acetyl-L-methionyl-L-valyl-[protein] + CoA + H(+). The enzyme catalyses N-terminal L-methionyl-L-threonyl-[protein] + acetyl-CoA = N-terminal N(alpha)-acetyl-L-methionyl-L-threonyl-[protein] + CoA + H(+). The catalysed reaction is N-terminal L-methionyl-L-lysyl-[protein] + acetyl-CoA = N-terminal N(alpha)-acetyl-L-methionyl-L-lysyl-[protein] + CoA + H(+). It catalyses the reaction N-terminal L-methionyl-L-leucyl-[protein] + acetyl-CoA = N-terminal N(alpha)-acetyl-L-methionyl-L-leucyl-[protein] + CoA + H(+). It carries out the reaction N-terminal L-methionyl-L-phenylalanyl-[protein] + acetyl-CoA = N-terminal N(alpha)-acetyl-L-methionyl-L-phenylalanyl-[protein] + CoA + H(+). The enzyme catalyses N-terminal L-methionyl-L-tyrosyl-[protein] + acetyl-CoA = N-terminal N(alpha)-acetyl-L-methionyl-L-tyrosyl-[protein] + CoA + H(+). Its function is as follows. N-alpha-acetyltransferase that acetylates the N-terminus of proteins that retain their initiating methionine. Has a broad substrate specificity: able to acetylate the initiator methionine of most peptides, except for those with a proline in second position. Also displays N-epsilon-acetyltransferase activity by mediating acetylation of the side chain of specific lysines on proteins. Autoacetylates in vivo. The relevance of N-epsilon-acetyltransferase activity is however unclear: able to acetylate H4 in vitro, but this result has not been confirmed in vivo. Component of N-alpha-acetyltransferase complexes containing NAA10 and NAA15, which has N-alpha-acetyltransferase activity. Does not influence the acetyltransferase activity of NAA10. However, it negatively regulates the N-alpha-acetyltransferase activity of the N-terminal acetyltransferase A complex (also called the NatA complex). The multiprotein complexes probably constitute the major contributor for N-terminal acetylation at the ribosome exit tunnel, with NAA10 acetylating all amino termini that are devoid of methionine and NAA50 acetylating other peptides. Required for sister chromatid cohesion during mitosis by promoting binding of CDCA5/sororin to cohesin: may act by counteracting the function of NAA10. This chain is N-alpha-acetyltransferase 50, found in Mus musculus (Mouse).